The sequence spans 127 residues: Single-stranded DNA-binding protein 2 (127 aa).

Positions 4-103 (INKVMLVGRC…ITINTIELLG (100 aa)) constitute an SSB domain. The tract at residues 104-127 (SPRKEESTSTSAPNETQAVANANF) is disordered. The span at 111 to 127 (TSTSAPNETQAVANANF) shows a compositional bias: polar residues.

As to quaternary structure, homotetramer.

In Nostoc sp. (strain PCC 7120 / SAG 25.82 / UTEX 2576), this protein is Single-stranded DNA-binding protein 2 (ssb2).